The chain runs to 1072 residues: DNA-directed RNA polymerase subunit beta (1072 aa).

This sequence belongs to the RNA polymerase beta chain family. In terms of assembly, in plastids the minimal PEP RNA polymerase catalytic core is composed of four subunits: alpha, beta, beta', and beta''. When a (nuclear-encoded) sigma factor is associated with the core the holoenzyme is formed, which can initiate transcription.

Its subcellular location is the plastid. It localises to the chloroplast. It catalyses the reaction RNA(n) + a ribonucleoside 5'-triphosphate = RNA(n+1) + diphosphate. Its function is as follows. DNA-dependent RNA polymerase catalyzes the transcription of DNA into RNA using the four ribonucleoside triphosphates as substrates. The chain is DNA-directed RNA polymerase subunit beta from Capsella bursa-pastoris (Shepherd's purse).